The following is a 476-amino-acid chain: tRNA-2-methylthio-N(6)-dimethylallyladenosine synthase (476 aa).

The region spanning 5 to 122 (KKLYIKTWGC…LPEMINQVKG (118 aa)) is the MTTase N-terminal domain. Positions 14, 51, 85, 159, 163, and 166 each coordinate [4Fe-4S] cluster. The Radical SAM core domain maps to 145–377 (RAEGPSAFVS…QQRINQQAMS (233 aa)). Residues 380 to 443 (RAMLGSVQRI…ANSLRGKVIR (64 aa)) form the TRAM domain.

The protein belongs to the methylthiotransferase family. MiaB subfamily. In terms of assembly, monomer. [4Fe-4S] cluster serves as cofactor.

The protein resides in the cytoplasm. It catalyses the reaction N(6)-dimethylallyladenosine(37) in tRNA + (sulfur carrier)-SH + AH2 + 2 S-adenosyl-L-methionine = 2-methylsulfanyl-N(6)-dimethylallyladenosine(37) in tRNA + (sulfur carrier)-H + 5'-deoxyadenosine + L-methionine + A + S-adenosyl-L-homocysteine + 2 H(+). In terms of biological role, catalyzes the methylthiolation of N6-(dimethylallyl)adenosine (i(6)A), leading to the formation of 2-methylthio-N6-(dimethylallyl)adenosine (ms(2)i(6)A) at position 37 in tRNAs that read codons beginning with uridine. In Photorhabdus laumondii subsp. laumondii (strain DSM 15139 / CIP 105565 / TT01) (Photorhabdus luminescens subsp. laumondii), this protein is tRNA-2-methylthio-N(6)-dimethylallyladenosine synthase.